A 326-amino-acid polypeptide reads, in one-letter code: Vitamin B12 import system permease protein BtuC (326 aa).

A run of 9 helical transmembrane segments spans residues 15-35, 61-81, 88-108, 112-132, 146-166, 184-204, 240-260, 274-294, and 302-322; these read WLLC…CAGE, LAVL…QALF, PGLL…VLLG, LPNW…TLIL, LLAG…AIYF, GGVD…LLWI, GWMV…GLVI, VLLP…DIVA, and ELPI…WLLL.

This sequence belongs to the binding-protein-dependent transport system permease family. FecCD subfamily. In terms of assembly, the complex is composed of two ATP-binding proteins (BtuD), two transmembrane proteins (BtuC) and a solute-binding protein (BtuF).

The protein resides in the cell inner membrane. In terms of biological role, part of the ABC transporter complex BtuCDF involved in vitamin B12 import. Involved in the translocation of the substrate across the membrane. This Escherichia coli O7:K1 (strain IAI39 / ExPEC) protein is Vitamin B12 import system permease protein BtuC.